A 618-amino-acid polypeptide reads, in one-letter code: 1-deoxy-D-xylulose-5-phosphate synthase (618 aa).

Residues histidine 70 and 111–113 (GHS) each bind thiamine diphosphate. Aspartate 142 is a binding site for Mg(2+). Thiamine diphosphate is bound by residues 143-144 (GS), asparagine 171, tyrosine 278, and glutamate 360. Asparagine 171 contributes to the Mg(2+) binding site.

The protein belongs to the transketolase family. DXPS subfamily. In terms of assembly, homodimer. It depends on Mg(2+) as a cofactor. The cofactor is thiamine diphosphate.

It carries out the reaction D-glyceraldehyde 3-phosphate + pyruvate + H(+) = 1-deoxy-D-xylulose 5-phosphate + CO2. The protein operates within metabolic intermediate biosynthesis; 1-deoxy-D-xylulose 5-phosphate biosynthesis; 1-deoxy-D-xylulose 5-phosphate from D-glyceraldehyde 3-phosphate and pyruvate: step 1/1. Catalyzes the acyloin condensation reaction between C atoms 2 and 3 of pyruvate and glyceraldehyde 3-phosphate to yield 1-deoxy-D-xylulose-5-phosphate (DXP). This is 1-deoxy-D-xylulose-5-phosphate synthase from Helicobacter pylori (strain J99 / ATCC 700824) (Campylobacter pylori J99).